The sequence spans 207 residues: Small ribosomal subunit protein uS4 (207 aa).

Over residues 29–38 (QDKAKFDSKP) the composition is skewed to basic and acidic residues. Residues 29-54 (QDKAKFDSKPGQHGRTSGQRTSDYGL) are disordered. Positions 42–52 (GRTSGQRTSDY) are enriched in polar residues. In terms of domain architecture, S4 RNA-binding spans 97 to 160 (SRLDNVVYRM…KKQTRIAEAL (64 aa)).

This sequence belongs to the universal ribosomal protein uS4 family. Part of the 30S ribosomal subunit. Contacts protein S5. The interaction surface between S4 and S5 is involved in control of translational fidelity.

One of the primary rRNA binding proteins, it binds directly to 16S rRNA where it nucleates assembly of the body of the 30S subunit. In terms of biological role, with S5 and S12 plays an important role in translational accuracy. The polypeptide is Small ribosomal subunit protein uS4 (Variovorax paradoxus (strain S110)).